The primary structure comprises 156 residues: Small ribosomal subunit protein uS7 (156 aa).

Belongs to the universal ribosomal protein uS7 family. In terms of assembly, part of the 30S ribosomal subunit. Contacts proteins S9 and S11.

One of the primary rRNA binding proteins, it binds directly to 16S rRNA where it nucleates assembly of the head domain of the 30S subunit. Is located at the subunit interface close to the decoding center, probably blocks exit of the E-site tRNA. In Clostridium acetobutylicum (strain ATCC 824 / DSM 792 / JCM 1419 / IAM 19013 / LMG 5710 / NBRC 13948 / NRRL B-527 / VKM B-1787 / 2291 / W), this protein is Small ribosomal subunit protein uS7.